Reading from the N-terminus, the 132-residue chain is Small ribosomal subunit protein uS8 (132 aa).

This sequence belongs to the universal ribosomal protein uS8 family. As to quaternary structure, part of the 30S ribosomal subunit. Contacts proteins S5 and S12.

Functionally, one of the primary rRNA binding proteins, it binds directly to 16S rRNA central domain where it helps coordinate assembly of the platform of the 30S subunit. The polypeptide is Small ribosomal subunit protein uS8 (Pseudarthrobacter chlorophenolicus (strain ATCC 700700 / DSM 12829 / CIP 107037 / JCM 12360 / KCTC 9906 / NCIMB 13794 / A6) (Arthrobacter chlorophenolicus)).